The primary structure comprises 502 residues: Glycogen synthase 1 (502 aa).

An ADP-alpha-D-glucose-binding site is contributed by K18.

Belongs to the glycosyltransferase 1 family. Bacterial/plant glycogen synthase subfamily.

It carries out the reaction [(1-&gt;4)-alpha-D-glucosyl](n) + ADP-alpha-D-glucose = [(1-&gt;4)-alpha-D-glucosyl](n+1) + ADP + H(+). It functions in the pathway glycan biosynthesis; glycogen biosynthesis. Functionally, synthesizes alpha-1,4-glucan chains using ADP-glucose. This chain is Glycogen synthase 1, found in Geobacter metallireducens (strain ATCC 53774 / DSM 7210 / GS-15).